A 440-amino-acid polypeptide reads, in one-letter code: MSHEEDLIDYSDEELQTTDAAATTAAPASNGEAKKGDLTVSGGRPDKKGSYVGIHSTGFRDFLLKEELLRAITDCGFEHPSEVQQVCIPTAILNVDVLCQAKSGLGKTAVFVLTTLHQLEPVPGECSILVMCHTRELAYQIKNEYARFSKYLPDVKTAVFYGGTPIQKDVELLSNKESYPNIVVGTPGRLNALVRDKKLSLRNVKAFVLDECDKMLDQIDMRRDVQEIFRATPADKQVMMFSATLSQEIRPVCKKFMRNPLEVYVDDDTKLTLHGLQQYYIKLSEAEKNRKLNELLDSLEFNQVIIFVKSTLRANELDKLLRECNFPSIAVHSGVSQEERIKRYKEFKEFNKRICVATDVFGRGIDIERINLAINYDLPADADSYLHRVGRAGRFGTKGLSISFVSTEDDEKVLKDIEKRFEVALPEYPEGGVDSSTYMA.

Residues 1 to 16 (MSHEEDLIDYSDEELQ) are compositionally biased toward acidic residues. Residues 1-42 (MSHEEDLIDYSDEELQTTDAAATTAAPASNGEAKKGDLTVSG) form a disordered region. The span at 17 to 28 (TTDAAATTAAPA) shows a compositional bias: low complexity. Residues 57 to 85 (TGFRDFLLKEELLRAITDCGFEHPSEVQQ) carry the Q motif motif. In terms of domain architecture, Helicase ATP-binding spans 88–263 (IPTAILNVDV…KKFMRNPLEV (176 aa)). Residue 101 to 108 (AKSGLGKT) participates in ATP binding. Positions 210-213 (DECD) match the DEAD box motif. A Helicase C-terminal domain is found at 291-436 (KLNELLDSLE…EYPEGGVDSS (146 aa)).

The protein belongs to the DEAD box helicase family. DECD subfamily.

It is found in the nucleus. The enzyme catalyses ATP + H2O = ADP + phosphate + H(+). ATP-binding RNA helicase involved in transcription elongation and required for the export of mRNA out of the nucleus. SUB2 also plays a role in pre-mRNA splicing and spliceosome assembly. May be involved in rDNA and telomeric silencing, and maintenance of genome integrity. The sequence is that of ATP-dependent RNA helicase sub2 (sub2) from Aspergillus niger (strain ATCC MYA-4892 / CBS 513.88 / FGSC A1513).